The following is a 191-amino-acid chain: Holliday junction branch migration complex subunit RuvA (191 aa).

The segment at 1–64 is domain I; the sequence is MIGSITGNVE…DNITQLYGFL (64 aa). Residues 65–142 form a domain II region; the sequence is NRQEQDYFKM…KMPIEETFSI (78 aa). The interval 143-146 is flexible linker; the sequence is IEND. Residues 146–191 are domain III; sequence DDSLAALISLGYEKLKAFNVIQEIKSKTPDASTQEVIRKALQKLSQ.

The protein belongs to the RuvA family. In terms of assembly, homotetramer. Forms an RuvA(8)-RuvB(12)-Holliday junction (HJ) complex. HJ DNA is sandwiched between 2 RuvA tetramers; dsDNA enters through RuvA and exits via RuvB. An RuvB hexamer assembles on each DNA strand where it exits the tetramer. Each RuvB hexamer is contacted by two RuvA subunits (via domain III) on 2 adjacent RuvB subunits; this complex drives branch migration. In the full resolvosome a probable DNA-RuvA(4)-RuvB(12)-RuvC(2) complex forms which resolves the HJ.

It localises to the cytoplasm. The RuvA-RuvB-RuvC complex processes Holliday junction (HJ) DNA during genetic recombination and DNA repair, while the RuvA-RuvB complex plays an important role in the rescue of blocked DNA replication forks via replication fork reversal (RFR). RuvA specifically binds to HJ cruciform DNA, conferring on it an open structure. The RuvB hexamer acts as an ATP-dependent pump, pulling dsDNA into and through the RuvAB complex. HJ branch migration allows RuvC to scan DNA until it finds its consensus sequence, where it cleaves and resolves the cruciform DNA. This Ehrlichia ruminantium (strain Gardel) protein is Holliday junction branch migration complex subunit RuvA.